A 957-amino-acid polypeptide reads, in one-letter code: Glycine dehydrogenase (decarboxylating) (957 aa).

N6-(pyridoxal phosphate)lysine is present on Lys-708.

Belongs to the GcvP family. As to quaternary structure, the glycine cleavage system is composed of four proteins: P, T, L and H. Requires pyridoxal 5'-phosphate as cofactor.

The enzyme catalyses N(6)-[(R)-lipoyl]-L-lysyl-[glycine-cleavage complex H protein] + glycine + H(+) = N(6)-[(R)-S(8)-aminomethyldihydrolipoyl]-L-lysyl-[glycine-cleavage complex H protein] + CO2. Its function is as follows. The glycine cleavage system catalyzes the degradation of glycine. The P protein binds the alpha-amino group of glycine through its pyridoxal phosphate cofactor; CO(2) is released and the remaining methylamine moiety is then transferred to the lipoamide cofactor of the H protein. This is Glycine dehydrogenase (decarboxylating) from Escherichia coli O7:K1 (strain IAI39 / ExPEC).